The primary structure comprises 624 residues: Glutamine--fructose-6-phosphate aminotransferase [isomerizing] (624 aa).

The active-site Nucleophile; for GATase activity is Cys-2. In terms of domain architecture, Glutamine amidotransferase type-2 spans Cys-2–Asp-226. SIS domains follow at residues Ser-297–Thr-436 and Leu-469–Pro-614. The active-site For Fru-6P isomerization activity is Lys-619.

In terms of assembly, homodimer.

It localises to the cytoplasm. The catalysed reaction is D-fructose 6-phosphate + L-glutamine = D-glucosamine 6-phosphate + L-glutamate. Its function is as follows. Catalyzes the first step in hexosamine metabolism, converting fructose-6P into glucosamine-6P using glutamine as a nitrogen source. The sequence is that of Glutamine--fructose-6-phosphate aminotransferase [isomerizing] from Mycolicibacterium paratuberculosis (strain ATCC BAA-968 / K-10) (Mycobacterium paratuberculosis).